The chain runs to 507 residues: 3-[(3aS,4S,7aS)-7a-methyl-1,5-dioxo-octahydro-1H-inden-4-yl]propanoyl:CoA ligase (507 aa).

Residues 177–185 (TSGTTGRSK), aspartate 391, arginine 406, and lysine 497 contribute to the ATP site.

Belongs to the ATP-dependent AMP-binding enzyme family.

It catalyses the reaction 3-[(3aS,4S,7aS)-7a-methyl-1,5-dioxo-octahydro-1H-inden-4-yl]propanoate + ATP + CoA = 3-[(3aS,4S,7aS)-7a-methyl-1,5-dioxo-octahydro-1H-inden-4-yl]propanoyl-CoA + AMP + diphosphate. The enzyme catalyses 5-hydroxy-3-[(3aS,4S,5R,7aS)-7a-methyl-1,5-dioxo-octahydro-1H-inden-4-yl]propanoate + ATP + CoA = 3-[(3aS,4S,5R,7aS)-5-hydroxy-7a-methyl-1-oxo-octahydro-1H-inden-4-yl]propanoyl-CoA + AMP + diphosphate. Involved in the catabolism of the rings C and D of cholesterol. Catalyzes the ATP-dependent CoA thioesterification of 3aalpha-H-4alpha(3'-propanoate)-7abeta-methylhexahydro-1,5-indanedione (HIP) to yield HIP-CoA. It can also use the hydroxylated analogs of HIP, 5alpha-OH HIP and 1beta-OH HIP. It requires that the side chain at C17 is completely removed. This Mycobacterium tuberculosis (strain ATCC 25618 / H37Rv) protein is 3-[(3aS,4S,7aS)-7a-methyl-1,5-dioxo-octahydro-1H-inden-4-yl]propanoyl:CoA ligase.